We begin with the raw amino-acid sequence, 96 residues long: MGSGYAKKKKEAKLMERQFMEMEASLEQKRFSGEAGNGLVSVTINGKCNLVDVKIKPDCLDPEDPEVVADLFRAAFKAAKAALDSEMSAMHMGMPF.

This sequence belongs to the YbaB/EbfC family. As to quaternary structure, homodimer.

It localises to the cytoplasm. It is found in the nucleoid. Functionally, binds to DNA and alters its conformation. May be involved in regulation of gene expression, nucleoid organization and DNA protection. This Chlamydia muridarum (strain MoPn / Nigg) protein is Nucleoid-associated protein TC_0612.